A 270-amino-acid polypeptide reads, in one-letter code: 4-hydroxy-tetrahydrodipicolinate reductase (270 aa).

NAD(+) is bound by residues 8-13 (GALGRM), Asp34, 102-104 (GTT), and 128-131 (SQNY). His160 functions as the Proton donor/acceptor in the catalytic mechanism. His161 is a (S)-2,3,4,5-tetrahydrodipicolinate binding site. Lys164 functions as the Proton donor in the catalytic mechanism. Position 170-171 (170-171 (GT)) interacts with (S)-2,3,4,5-tetrahydrodipicolinate.

It belongs to the DapB family.

It localises to the cytoplasm. The enzyme catalyses (S)-2,3,4,5-tetrahydrodipicolinate + NAD(+) + H2O = (2S,4S)-4-hydroxy-2,3,4,5-tetrahydrodipicolinate + NADH + H(+). It carries out the reaction (S)-2,3,4,5-tetrahydrodipicolinate + NADP(+) + H2O = (2S,4S)-4-hydroxy-2,3,4,5-tetrahydrodipicolinate + NADPH + H(+). Its pathway is amino-acid biosynthesis; L-lysine biosynthesis via DAP pathway; (S)-tetrahydrodipicolinate from L-aspartate: step 4/4. In terms of biological role, catalyzes the conversion of 4-hydroxy-tetrahydrodipicolinate (HTPA) to tetrahydrodipicolinate. The sequence is that of 4-hydroxy-tetrahydrodipicolinate reductase from Methanococcus maripaludis (strain C6 / ATCC BAA-1332).